We begin with the raw amino-acid sequence, 131 residues long: Methylglyoxal synthase (131 aa).

An MGS-like domain is found at 1-131 (MKIALIAHDK…GDLDYRKFRK (131 aa)). Substrate-binding positions include His8, Lys12, 34-37 (TGTT), and 54-55 (SG). Asp60 serves as the catalytic Proton donor/acceptor. His87 is a binding site for substrate.

Belongs to the methylglyoxal synthase family.

The catalysed reaction is dihydroxyacetone phosphate = methylglyoxal + phosphate. Functionally, catalyzes the formation of methylglyoxal from dihydroxyacetone phosphate. The protein is Methylglyoxal synthase of Bacillus cytotoxicus (strain DSM 22905 / CIP 110041 / 391-98 / NVH 391-98).